The primary structure comprises 913 residues: Eukaryotic translation initiation factor 3 subunit C (913 aa).

A disordered region spans residues 1–31; the sequence is MSRFFANGSDSESESSEEEVQASNFNKANNF. Residues 11–20 are compositionally biased toward acidic residues; sequence SESESSEEEV. A compositionally biased stretch (polar residues) spans 21 to 31; it reads QASNFNKANNF. A phosphoserine mark is found at S34, S165, S177, and S186. 2 disordered regions span residues 157 to 195 and 208 to 285; these read FREAPDQESDVDEGEGEAHDSDAERAGADSDGGIGAGTG and PTKV…EDGE. The segment covering 162–171 has biased composition (acidic residues); that stretch reads DQESDVDEGE. Positions 172-184 are enriched in basic and acidic residues; that stretch reads GEAHDSDAERAGA. Acidic residues predominate over residues 214–239; that stretch reads DEDDSDDSIDWDSDTESETESSEDEN. Positions 244–263 are enriched in basic and acidic residues; that stretch reads MRERFLKRTTEKEDKDDDKR. Residues 264-276 show a composition bias toward basic residues; sequence KDKRKEQKHKVRK. The PCI domain maps to 645 to 821; sequence FHMHINLELL…ETVVMHRSEP (177 aa). Residues 856–913 are disordered; that stretch reads RGNMGNRDRGYNRNQNNQGGNWGGQRRDNRNQRNRNQRGHHKQQQQQQQQQVQTIEEE. The span at 887–898 shows a compositional bias: basic residues; it reads QRNRNQRGHHKQ.

The protein belongs to the eIF-3 subunit C family. As to quaternary structure, component of the eukaryotic translation initiation factor 3 (eIF-3) complex. The eIF-3 complex interacts with pix.

It is found in the cytoplasm. Component of the eukaryotic translation initiation factor 3 (eIF-3) complex, which is involved in protein synthesis of a specialized repertoire of mRNAs and, together with other initiation factors, stimulates binding of mRNA and methionyl-tRNAi to the 40S ribosome. The eIF-3 complex specifically targets and initiates translation of a subset of mRNAs involved in cell proliferation. The chain is Eukaryotic translation initiation factor 3 subunit C from Drosophila virilis (Fruit fly).